Reading from the N-terminus, the 106-residue chain is Cell division protein FtsB (106 aa).

The Cytoplasmic portion of the chain corresponds to 1 to 3 (MGK). A helical membrane pass occupies residues 4 to 21 (LTLLLLVLLGWLQYSLWL). At 22–106 (GKNGIHDYVR…SRPSTPNNTQ (85 aa)) the chain is on the periplasmic side. Positions 29-70 (YVRVKNDVAMQERNNSKLKARNDQLSAEIDDLTGGQEAIEER) form a coiled coil.

This sequence belongs to the FtsB family. In terms of assembly, part of a complex composed of FtsB, FtsL and FtsQ.

Its subcellular location is the cell inner membrane. In terms of biological role, essential cell division protein. May link together the upstream cell division proteins, which are predominantly cytoplasmic, with the downstream cell division proteins, which are predominantly periplasmic. This is Cell division protein FtsB from Photorhabdus laumondii subsp. laumondii (strain DSM 15139 / CIP 105565 / TT01) (Photorhabdus luminescens subsp. laumondii).